Consider the following 335-residue polypeptide: Calcium-binding protein TgpCaBP (335 aa).

Residues L30–A50 traverse the membrane as a helical segment. EF-hand domains lie at M113–Q148, Q153–E188, L190–N225, and V227–H262. Residues D126, D128, D130, K132, E137, D166, D168, D170, E177, D203, N205, D207, K209, E214, D240, N242, D244, and E251 each contribute to the Ca(2+) site. Positions H332 to L335 match the Prevents secretion from ER motif.

The protein resides in the endoplasmic reticulum membrane. It localises to the cytoplasm. It is found in the cytosol. Functionally, calcium-binding protein. Participates in the efflux of intracellular Ca(2+) and storage of Ca(2+) in the endoplasmic reticulum. Required for gliding, host cell invasion and egress. Required for microneme secretion. The sequence is that of Calcium-binding protein TgpCaBP from Toxoplasma gondii.